We begin with the raw amino-acid sequence, 756 residues long: Membrane-anchored protein 1 (756 aa).

The first 24 residues, 1–24 (MIRNTLAFLAILFLLIPTALLIIG), serve as a signal peptide directing secretion. Asn-52 and Asn-64 each carry an N-linked (GlcNAc...) asparagine glycan. The next 3 membrane-spanning stretches (helical) occupy residues 91–111 (IISA…IFLV), 120–140 (IIVV…ELVL), and 148–168 (QSYV…ALCL). Asn-190 is a glycosylation site (N-linked (GlcNAc...) asparagine). Residues 281–328 (YDEFRKSESSPSRSSVLSTSKPEVHETEGYCPHKTGNRPGFPSLNIPR) are disordered. Residues 289-300 (SSPSRSSVLSTS) show a composition bias toward low complexity. N-linked (GlcNAc...) asparagine glycans are attached at residues Asn-396 and Asn-407. Residues 427 to 453 (EPPATRMPQTRSPVNDHSSFPSDLPIK) form a disordered region. Residues 433–447 (MPQTRSPVNDHSSFP) show a composition bias toward polar residues. Phosphoserine is present on Ser-438. Asn-459, Asn-470, Asn-471, Asn-496, Asn-497, Asn-521, Asn-522, Asn-547, Asn-548, Asn-573, Asn-574, Asn-594, Asn-598, Asn-599, Asn-618, Asn-623, Asn-649, Asn-664, Asn-676, and Asn-685 each carry an N-linked (GlcNAc...) asparagine glycan. Residues 482-650 (MLKNVGNGPR…MPTSPNSRNN (169 aa)) are disordered. Low complexity predominate over residues 485–520 (NVGNGPRNAPRNNSSNNLHAQGGMPMNMRGPRGAPR). Composition is skewed to polar residues over residues 593–605 (RNTS…SEFN), 617–629 (RNAS…TDLF), and 640–650 (GMPTSPNSRNN). Over residues 686–697 (GSRNPSHGSLNT) the composition is skewed to polar residues. A disordered region spans residues 686 to 713 (GSRNPSHGSLNTAHAGMGYGPRSMMRDP). The N-linked (GlcNAc...) asparagine glycan is linked to Asn-715. The interval 735–756 (FELPVRGNRNNRRGPGGNRMIR) is disordered.

It to yeast YOL019W and YMR063W.

The protein localises to the cell membrane. It is found in the cell tip. In terms of biological role, required for correct cell separation at high temperatures. This Schizosaccharomyces pombe (strain 972 / ATCC 24843) (Fission yeast) protein is Membrane-anchored protein 1 (mac1).